A 457-amino-acid chain; its full sequence is Putative adhesion G protein-coupled receptor E4P (457 aa).

The first 14 residues, M1–S14, serve as a signal peptide directing secretion. Intrachain disulfides connect C15–C24, C18–C30, C32–C52, C58–C71, C65–C80, and C82–C103. In terms of domain architecture, EGF-like 1 spans C15–E53. Over P16–T191 the chain is Extracellular. A glycan (N-linked (GlcNAc...) asparagine) is linked at N26. Residues D54 to Y104 form the EGF-like 2; calcium-binding domain. N-linked (GlcNAc...) asparagine glycosylation is found at N106 and N162. A GAIN-B domain is found at D134–E186. 2 disulfides stabilise this stretch: C141-C168 and C156-C170. The segment at C141 to E186 is GPS. A helical transmembrane segment spans residues V192–F212. Topologically, residues L213 to T223 are cytoplasmic. The chain crosses the membrane as a helical span at residues S224–I244. N-linked (GlcNAc...) asparagine glycosylation is present at N245. Residues N245–E250 lie on the Extracellular side of the membrane. Residues V251–M271 traverse the membrane as a helical segment. At L272 to R299 the chain is on the cytoplasmic side. Residues F300–G320 traverse the membrane as a helical segment. Residues P321–G336 lie on the Extracellular side of the membrane. A helical membrane pass occupies residues F337–F357. The Cytoplasmic segment spans residues Q358–T384. A helical transmembrane segment spans residues F385–V405. The Extracellular portion of the chain corresponds to E406–G413. A helical transmembrane segment spans residues S414–V434. The Cytoplasmic portion of the chain corresponds to H435–N457.

The protein belongs to the G-protein coupled receptor 2 family. Adhesion G-protein coupled receptor (ADGR) subfamily. As to quaternary structure, forms a heterodimer, consisting of a large extracellular region (alpha subunit) non-covalently linked to a seven-transmembrane moiety (beta subunit). Glycosylated. In terms of processing, proteolytically cleaved into 2 subunits, an extracellular alpha subunit and a seven-transmembrane subunit.

The protein resides in the cell membrane. The protein localises to the secreted. Functionally, may mediate the cellular interaction between myeloid cells and B-cells. This chain is Putative adhesion G protein-coupled receptor E4P, found in Homo sapiens (Human).